Here is a 415-residue protein sequence, read N- to C-terminus: Serine hydroxymethyltransferase (415 aa).

(6S)-5,6,7,8-tetrahydrofolate contacts are provided by residues Leu-117 and 121–123 (GHL). The residue at position 226 (Lys-226) is an N6-(pyridoxal phosphate)lysine. Glu-241 serves as a coordination point for (6S)-5,6,7,8-tetrahydrofolate.

The protein belongs to the SHMT family. As to quaternary structure, homodimer. The cofactor is pyridoxal 5'-phosphate.

The protein localises to the cytoplasm. The catalysed reaction is (6R)-5,10-methylene-5,6,7,8-tetrahydrofolate + glycine + H2O = (6S)-5,6,7,8-tetrahydrofolate + L-serine. It functions in the pathway one-carbon metabolism; tetrahydrofolate interconversion. It participates in amino-acid biosynthesis; glycine biosynthesis; glycine from L-serine: step 1/1. In terms of biological role, catalyzes the reversible interconversion of serine and glycine with tetrahydrofolate (THF) serving as the one-carbon carrier. This reaction serves as the major source of one-carbon groups required for the biosynthesis of purines, thymidylate, methionine, and other important biomolecules. Also exhibits THF-independent aldolase activity toward beta-hydroxyamino acids, producing glycine and aldehydes, via a retro-aldol mechanism. The chain is Serine hydroxymethyltransferase from Bacillus subtilis (strain 168).